A 172-amino-acid polypeptide reads, in one-letter code: Thioredoxin M5, chloroplastic (172 aa).

The transit peptide at 1 to 59 (MALETCFRAWATLHAPQPPSSGGSRDRLLLSGAGSSQSKPRLSVASPSPLRPASRFACQ) directs the protein to the chloroplast. The tract at residues 17 to 47 (QPPSSGGSRDRLLLSGAGSSQSKPRLSVASP) is disordered. In terms of domain architecture, Thioredoxin spans 60-171 (CSNVVDEVVV…LATIIDKYVS (112 aa)). Active-site nucleophile residues include Cys95 and Cys98. An intrachain disulfide couples Cys95 to Cys98.

Belongs to the thioredoxin family. Plant M-type subfamily. In terms of tissue distribution, expressed in leaves and at lower levels in flowers.

It localises to the plastid. It is found in the chloroplast. Functionally, thiol-disulfide oxidoreductase probably involved in the redox regulation of chloroplastic enzymes. Required for chloroplast biogenesis and differentiation. Functions as an electron donor for plastidial 2-Cys peroxiredoxins and participates in hydrogen peroxide scavenging system in chloroplasts. Possesses reducing activity towards insulin disulfide bonds. In Oryza sativa subsp. japonica (Rice), this protein is Thioredoxin M5, chloroplastic (TRXM).